The following is a 438-amino-acid chain: Aspartate--tRNA(Asp) ligase (438 aa).

Glutamate 170 contacts L-aspartate. Residues glutamine 192–lysine 195 form an aspartate region. Arginine 214 is a binding site for L-aspartate. ATP-binding positions include arginine 214–glutamate 216, arginine 222–leucine 224, and glutamate 361. Residues glutamate 361 and serine 364 each coordinate Mg(2+). Residues serine 364 and arginine 368 each coordinate L-aspartate. ATP is bound at residue glycine 409 to arginine 412.

The protein belongs to the class-II aminoacyl-tRNA synthetase family. Type 2 subfamily. Homodimer. The cofactor is Mg(2+).

The protein resides in the cytoplasm. It carries out the reaction tRNA(Asp) + L-aspartate + ATP = L-aspartyl-tRNA(Asp) + AMP + diphosphate. Its function is as follows. Catalyzes the attachment of L-aspartate to tRNA(Asp) in a two-step reaction: L-aspartate is first activated by ATP to form Asp-AMP and then transferred to the acceptor end of tRNA(Asp). The sequence is that of Aspartate--tRNA(Asp) ligase from Pyrococcus furiosus (strain ATCC 43587 / DSM 3638 / JCM 8422 / Vc1).